Here is a 376-residue protein sequence, read N- to C-terminus: Glutamate 5-kinase (376 aa).

Residue Lys16 coordinates ATP. Substrate-binding residues include Ser56, Asp143, and Asn155. 175 to 176 serves as a coordination point for ATP; that stretch reads TD. The region spanning 283 to 361 is the PUA domain; sequence RGALSLDEGA…RDIETTLGYV (79 aa).

This sequence belongs to the glutamate 5-kinase family.

Its subcellular location is the cytoplasm. It carries out the reaction L-glutamate + ATP = L-glutamyl 5-phosphate + ADP. Its pathway is amino-acid biosynthesis; L-proline biosynthesis; L-glutamate 5-semialdehyde from L-glutamate: step 1/2. Functionally, catalyzes the transfer of a phosphate group to glutamate to form L-glutamate 5-phosphate. This chain is Glutamate 5-kinase, found in Halorhodospira halophila (strain DSM 244 / SL1) (Ectothiorhodospira halophila (strain DSM 244 / SL1)).